The sequence spans 61 residues: Double gene block protein 1 (61 aa).

Residues 15–45 form a disordered region; that stretch reads LAGNRGKQKTRRSVAKDAIRKPASDSTNGGN. Positions 17 to 35 are RNA-binding; it reads GNRGKQKTRRSVAKDAIRK. Basic and acidic residues predominate over residues 28–37; sequence VAKDAIRKPA.

This sequence belongs to the carmovirus double gene block protein 1 family. Homodimer.

Cell-to-cell movement. Displays RNA-binding activity. The sequence is that of Double gene block protein 1 from Carnation mottle virus (isolate China/Shanghai) (CarMV).